The sequence spans 211 residues: tRNA (pseudouridine(54)-N(1))-methyltransferase (211 aa).

S-adenosyl-L-methionine contacts are provided by Leu-128, Gly-150, and Cys-183.

It belongs to the methyltransferase superfamily. TrmY family. Homodimer.

It is found in the cytoplasm. The enzyme catalyses pseudouridine(54) in tRNA + S-adenosyl-L-methionine = N(1)-methylpseudouridine(54) in tRNA + S-adenosyl-L-homocysteine + H(+). Functionally, specifically catalyzes the N1-methylation of pseudouridine at position 54 (Psi54) in tRNAs. This chain is tRNA (pseudouridine(54)-N(1))-methyltransferase, found in Methanosarcina mazei (strain ATCC BAA-159 / DSM 3647 / Goe1 / Go1 / JCM 11833 / OCM 88) (Methanosarcina frisia).